A 232-amino-acid polypeptide reads, in one-letter code: Large ribosomal subunit protein uL1 (232 aa).

This sequence belongs to the universal ribosomal protein uL1 family. In terms of assembly, part of the 50S ribosomal subunit.

Its function is as follows. Binds directly to 23S rRNA. The L1 stalk is quite mobile in the ribosome, and is involved in E site tRNA release. Functionally, protein L1 is also a translational repressor protein, it controls the translation of the L11 operon by binding to its mRNA. The sequence is that of Large ribosomal subunit protein uL1 from Bordetella petrii (strain ATCC BAA-461 / DSM 12804 / CCUG 43448).